The sequence spans 240 residues: UDP-2,3-diacylglucosamine hydrolase (240 aa).

The Mn(2+) site is built by Asp-8, His-10, Asp-41, Asn-79, and His-114. 79–80 provides a ligand contact to substrate; that stretch reads NR. 5 residues coordinate substrate: Asp-122, Ser-160, Asn-164, Lys-167, and His-195. The Mn(2+) site is built by His-195 and His-197.

The protein belongs to the LpxH family. Mn(2+) is required as a cofactor.

It is found in the cell inner membrane. It catalyses the reaction UDP-2-N,3-O-bis[(3R)-3-hydroxytetradecanoyl]-alpha-D-glucosamine + H2O = 2-N,3-O-bis[(3R)-3-hydroxytetradecanoyl]-alpha-D-glucosaminyl 1-phosphate + UMP + 2 H(+). The protein operates within glycolipid biosynthesis; lipid IV(A) biosynthesis; lipid IV(A) from (3R)-3-hydroxytetradecanoyl-[acyl-carrier-protein] and UDP-N-acetyl-alpha-D-glucosamine: step 4/6. Hydrolyzes the pyrophosphate bond of UDP-2,3-diacylglucosamine to yield 2,3-diacylglucosamine 1-phosphate (lipid X) and UMP by catalyzing the attack of water at the alpha-P atom. Involved in the biosynthesis of lipid A, a phosphorylated glycolipid that anchors the lipopolysaccharide to the outer membrane of the cell. This chain is UDP-2,3-diacylglucosamine hydrolase, found in Serratia proteamaculans (strain 568).